Consider the following 206-residue polypeptide: CASP-like protein 4B2 (206 aa).

2 stretches are compositionally biased toward low complexity: residues 1–12 (MAMVPADADAAA) and 24–36 (SSQN…AAAA). The disordered stretch occupies residues 1–42 (MAMVPADADAAAKPPPDVEKPDYSSQNGAPNSAAAAAGGGGG). At 1–60 (MAMVPADADAAAKPPPDVEKPDYSSQNGAPNSAAAAAGGGGGGVVDSVVARWRREDMLDK) the chain is on the cytoplasmic side. A helical membrane pass occupies residues 61–81 (SPLALHAAAAAFAFVALVLVA). Topologically, residues 82–99 (SNQHGDWMEFDRYQEYRY) are extracellular. The helical transmembrane segment at 100–120 (LLAIAALAFAYSLAQALRHAL) threads the bilayer. The Cytoplasmic portion of the chain corresponds to 121 to 138 (RMRRGVDPVPTASGRLLD). Residues 139-159 (FASDQVVAYLLMSALSAATPI) traverse the membrane as a helical segment. The Extracellular segment spans residues 160–174 (TNRMRSAVINRFTDT). A helical membrane pass occupies residues 175–195 (TAAAISMAFLAFVSLALSAIV). The Cytoplasmic segment spans residues 196–206 (SGYKLSKQTYM).

It belongs to the Casparian strip membrane proteins (CASP) family. Homodimer and heterodimers.

It localises to the cell membrane. The chain is CASP-like protein 4B2 from Oryza sativa subsp. japonica (Rice).